A 381-amino-acid chain; its full sequence is Creatine kinase M-type (381 aa).

Residues 11 to 98 enclose the Phosphagen kinase N-terminal domain; that stretch reads KLNYKPEEEY…FDPIISDRHG (88 aa). In terms of domain architecture, Phosphagen kinase C-terminal spans 125–367; that stretch reads YVLSSRVRTG…KLMVEMEKKL (243 aa). 128-132 is a binding site for ATP; the sequence is SSRVR. Ser164 is modified (phosphoserine). At Thr166 the chain carries Phosphothreonine. Residue Ser178 is modified to Phosphoserine. Thr180 bears the Phosphothreonine mark. His191 lines the ATP pocket. Ser199 carries the post-translational modification Phosphoserine. Arg236 and Arg292 together coordinate ATP. Residues Thr313 and Thr322 each carry the phosphothreonine modification. Residues 320–325 and Asp335 each bind ATP; that span reads RGTGGV. A Phosphoserine modification is found at Ser372.

This sequence belongs to the ATP:guanido phosphotransferase family. Dimer of identical or non-identical chains, which can be either B (brain type) or M (muscle type). With MM being the major form in skeletal muscle and myocardium, MB existing in myocardium, and BB existing in many tissues, especially brain.

The protein resides in the cytoplasm. The catalysed reaction is creatine + ATP = N-phosphocreatine + ADP + H(+). Its function is as follows. Reversibly catalyzes the transfer of phosphate between ATP and various phosphogens (e.g. creatine phosphate). Creatine kinase isoenzymes play a central role in energy transduction in tissues with large, fluctuating energy demands, such as skeletal muscle, heart, brain and spermatozoa. In Homo sapiens (Human), this protein is Creatine kinase M-type (CKM).